Reading from the N-terminus, the 256-residue chain is UPF0246 protein Swoo_1284 (256 aa).

The protein belongs to the UPF0246 family.

The sequence is that of UPF0246 protein Swoo_1284 from Shewanella woodyi (strain ATCC 51908 / MS32).